We begin with the raw amino-acid sequence, 445 residues long: MNEEYDVIVLGTGLTECILSGIMTVNGKKVLHMDRNPYYGGESASITPLEDLYKRFKIPGAPPASMGRGRDWNLDLIPKFLMANGQLVKMLLYTEVTRYLDFKVTEGSFVYKGGKIYKVPSTEAEALASSLMGLFEKRRFRKFLVYVANFDEKDPRTFEGIDPKKTAIGEVYKKFDLGQDVIDFTGHALALYRTDDYLDQPCCETINRIKLYSESLARYGKSPYLYPLYGLGELPQGFARLSAIYGGTYMLNKPIEEIIVQNGKVIGVKSEGEVARCKQLICDPSYVKDRVEKVGQVIRVICILSHPIKNTNDANSCQIIIPQNQVNRKSDIYVCMISSAHNVAAQGKYIAIVSTTAETKEPEKEIRPALELLEPIEQKFVSISDLLVPKDLGTESQIFISRTYDATTHFETTCDDIKNIYKRMTGSEFDFEEMKRKKNDIYGED.

At M1 the chain carries N-acetylmethionine. K57 bears the N6-succinyllysine mark. Position 112 is an N6-acetyllysine (K112). The residue at position 130 (S130) is a Phosphoserine. At K269 the chain carries N6-acetyllysine. S382 bears the Phosphoserine mark.

Belongs to the Rab GDI family. In terms of assembly, interacts with RHOH. Interacts with the GDP-bound inactive forms of RAB3A, RAB3B, RAB3C, RAB5A, RAB5B, RAB5C, RAB8A, RAB8B, RAB10, RAB12, RAB35, and RAB43; binds RAB3D to a lesser extent. Interacts with DZIP1; this interaction negatively regulates the interaction of GDI2 with GDP-bound RAB8A.

The protein localises to the cytoplasm. It is found in the membrane. The protein resides in the golgi apparatus. It localises to the trans-Golgi network. Its function is as follows. GDP-dissociation inhibitor preventing the GDP to GTP exchange of most Rab proteins. By keeping these small GTPases in their inactive GDP-bound form regulates intracellular membrane trafficking. Negatively regulates protein transport to the cilium and ciliogenesis through the inhibition of RAB8A. The polypeptide is Rab GDP dissociation inhibitor beta (GDI2) (Canis lupus familiaris (Dog)).